We begin with the raw amino-acid sequence, 490 residues long: Bifunctional protein HldE (490 aa).

The tract at residues 1–330 is ribokinase; the sequence is MSRFDTLLQS…RKILPHASLA (330 aa). 205 to 208 is a binding site for ATP; it reads NRKE. D275 is an active-site residue. The tract at residues 358–490 is cytidylyltransferase; the sequence is FTNGCFDILH…LVEKAREGTT (133 aa).

The protein in the N-terminal section; belongs to the carbohydrate kinase PfkB family. It in the C-terminal section; belongs to the cytidylyltransferase family. As to quaternary structure, homodimer.

The catalysed reaction is D-glycero-beta-D-manno-heptose 7-phosphate + ATP = D-glycero-beta-D-manno-heptose 1,7-bisphosphate + ADP + H(+). The enzyme catalyses D-glycero-beta-D-manno-heptose 1-phosphate + ATP + H(+) = ADP-D-glycero-beta-D-manno-heptose + diphosphate. It participates in nucleotide-sugar biosynthesis; ADP-L-glycero-beta-D-manno-heptose biosynthesis; ADP-L-glycero-beta-D-manno-heptose from D-glycero-beta-D-manno-heptose 7-phosphate: step 1/4. The protein operates within nucleotide-sugar biosynthesis; ADP-L-glycero-beta-D-manno-heptose biosynthesis; ADP-L-glycero-beta-D-manno-heptose from D-glycero-beta-D-manno-heptose 7-phosphate: step 3/4. Its function is as follows. Catalyzes the phosphorylation of D-glycero-D-manno-heptose 7-phosphate at the C-1 position to selectively form D-glycero-beta-D-manno-heptose-1,7-bisphosphate. In terms of biological role, catalyzes the ADP transfer from ATP to D-glycero-beta-D-manno-heptose 1-phosphate, yielding ADP-D-glycero-beta-D-manno-heptose. The polypeptide is Bifunctional protein HldE (Rhodopseudomonas palustris (strain BisB5)).